Here is a 550-residue protein sequence, read N- to C-terminus: Homeobox and leucine zipper protein Homez (550 aa).

The span at 1–10 (MVRGWEPPPG) shows a compositional bias: pro residues. The disordered stretch occupies residues 1 to 36 (MVRGWEPPPGLDCAISEGHKSEGTMPPNKEASGLSS). The homeobox 1 DNA-binding region spans 55 to 114 (WTQAAQTSELDSNEHLLKTFSYFPYPSLADIALLCLRYGLQMEKVKTWFMAQRLRCGISW). A disordered region spans residues 168–199 (GPPTLSKPTQTKGLKVEPEEPSQMPPLPQSHQ). Residues Lys182, Lys200, and Lys202 each participate in a glycyl lysine isopeptide (Lys-Gly) (interchain with G-Cter in SUMO2) cross-link. Residues 223-265 (LQSSGLSKEQAGRGPNQSHGIGTASWNHSTTVPQPQARDKPPP) are disordered. Residues 237–256 (PNQSHGIGTASWNHSTTVPQ) are compositionally biased toward polar residues. The residue at position 351 (Ser351) is a Phosphoserine. 2 consecutive DNA-binding regions (homeobox) follow at residues 355-415 (QRQR…KHGQ) and 451-510 (TPPL…AEVV). The short motif at 358 to 363 (RKTKRK) is the Nuclear localization signal element. Disordered regions lie at residues 424–465 (VPGA…DIQP) and 512–550 (CLDE…IIQD). Thr451 carries the phosphothreonine modification. Over residues 452–463 (PPLPIPPPPPDI) the composition is skewed to pro residues. Positions 513–550 (LDEEEEEEEEELPEDDEEEEEEEEEDDDDDDDDVIIQD) are enriched in acidic residues.

As to quaternary structure, homodimer or heterodimer (Potential). Interacts with HOXC8. Ubiquitous. Strongly expressed in adult testis and kidney as well as fetal lung and kidney.

It localises to the nucleus. May function as a transcriptional regulator. The chain is Homeobox and leucine zipper protein Homez (HOMEZ) from Homo sapiens (Human).